Here is a 396-residue protein sequence, read N- to C-terminus: Deoxyguanosinetriphosphate triphosphohydrolase-like protein (396 aa).

The region spanning 62-198 (RLTHSLEVAQ…AALADDIAYN (137 aa)) is the HD domain.

It belongs to the dGTPase family. Type 2 subfamily.

The chain is Deoxyguanosinetriphosphate triphosphohydrolase-like protein from Jannaschia sp. (strain CCS1).